Here is a 1210-residue protein sequence, read N- to C-terminus: Microtubule-associated tumor suppressor 1 homolog (1210 aa).

5 disordered regions span residues Met1 to Lys21, Asp370 to Met404, Val446 to Val482, Gln513 to Met545, and His585 to Glu618. Residues Asp370–Asp379 are compositionally biased toward basic and acidic residues. Phosphoserine is present on residues Ser375, Ser380, and Ser393. Positions Asp381–Arg398 are enriched in polar residues. The span at Val446–Arg455 shows a compositional bias: basic and acidic residues. The span at Lys473 to Val482 shows a compositional bias: polar residues. Residues Pro524–Pro534 are compositionally biased toward low complexity. The segment covering His585–Glu605 has biased composition (polar residues). At Ser621 the chain carries Phosphoserine. Positions Ser683 to Phe771 are disordered. Polar residues predominate over residues Pro692–Ser702. Positions Ile876–Leu1171 form a coiled coil. Phosphoserine occurs at positions 1143, 1164, 1185, 1195, 1199, 1201, 1203, 1204, and 1208. The disordered stretch occupies residues Gly1177–Arg1210. A compositionally biased stretch (low complexity) spans Ser1195–Arg1210.

Belongs to the MTUS1 family. Homodimer. Interacts with AGTR2. Interacts with PTPN6. As to expression, ubiquitously expressed, with highest levels in uterus and adrenal gland.

The protein localises to the mitochondrion. The protein resides in the golgi apparatus. It localises to the cell membrane. Its subcellular location is the nucleus. Cooperates with AGTR2 to inhibit ERK2 activation and cell proliferation. May be required for AGTR2 cell surface expression. Together with PTPN6, induces UBE2V2 expression upon angiotensin-II stimulation. In Mus musculus (Mouse), this protein is Microtubule-associated tumor suppressor 1 homolog (Mtus1).